Here is a 105-residue protein sequence, read N- to C-terminus: Small ribosomal subunit protein uS14m (105 aa).

This sequence belongs to the universal ribosomal protein uS14 family. In terms of assembly, component of the mitochondrial small ribosomal subunit (mt-SSU). Mature yeast 74S mitochondrial ribosomes consist of a small (37S) and a large (54S) subunit. The 37S small subunit contains a 15S ribosomal RNA (15S mt-rRNA) and at least 32 different proteins. The 54S large subunit contains a 21S rRNA (21S mt-rRNA) and at least 45 different proteins.

It is found in the mitochondrion. Component of the mitochondrial ribosome (mitoribosome), a dedicated translation machinery responsible for the synthesis of mitochondrial genome-encoded proteins, including at least some of the essential transmembrane subunits of the mitochondrial respiratory chain. The mitoribosomes are attached to the mitochondrial inner membrane and translation products are cotranslationally integrated into the membrane. The chain is Small ribosomal subunit protein uS14m (mrp2) from Schizosaccharomyces pombe (strain 972 / ATCC 24843) (Fission yeast).